Here is a 161-residue protein sequence, read N- to C-terminus: Putative 2'-deoxynucleoside 5'-phosphate N-hydrolase 1 (161 aa).

Substrate-binding positions include 27–33 (FLSGSIR), Tyr-42, His-60, Glu-106, and 128–130 (SSM).

It belongs to the 2'-deoxynucleoside 5'-phosphate N-hydrolase 1 family. In terms of assembly, monomer and homodimer.

The catalysed reaction is a pyrimidine 2'-deoxyribonucleoside 5'-phosphate + H2O = a pyrimidine nucleobase + 2-deoxy-D-ribose 5-phosphate. The enzyme catalyses a purine 2'-deoxyribonucleoside 5'-phosphate + H2O = a purine nucleobase + 2-deoxy-D-ribose 5-phosphate. In terms of biological role, catalyzes the cleavage of the N-glycosidic bond of deoxyribonucleoside 5'-monophosphates to yield deoxyribose 5-phosphate and a purine or pyrimidine base. This is Putative 2'-deoxynucleoside 5'-phosphate N-hydrolase 1 from Methanosarcina mazei (strain ATCC BAA-159 / DSM 3647 / Goe1 / Go1 / JCM 11833 / OCM 88) (Methanosarcina frisia).